Reading from the N-terminus, the 264-residue chain is Regulatory protein RecX (264 aa).

It belongs to the RecX family.

It localises to the cytoplasm. Functionally, modulates RecA activity. This Lacticaseibacillus casei (strain BL23) (Lactobacillus casei) protein is Regulatory protein RecX.